The chain runs to 448 residues: uncharacterized protein (448 aa).

Component of the acid-insoluble and acid-soluble organic matrix of the aragonitic skeleton (at protein level).

The protein resides in the secreted. This is an uncharacterized protein from Acropora millepora (Staghorn coral).